A 369-amino-acid chain; its full sequence is UDP-N-acetylglucosamine--N-acetylmuramyl-(pentapeptide) pyrophosphoryl-undecaprenol N-acetylglucosamine transferase (369 aa).

Residues 15–17, Asn-126, Arg-169, Ser-197, and Gln-299 contribute to the UDP-N-acetyl-alpha-D-glucosamine site; that span reads TGG.

It belongs to the glycosyltransferase 28 family. MurG subfamily.

Its subcellular location is the cell inner membrane. The catalysed reaction is di-trans,octa-cis-undecaprenyl diphospho-N-acetyl-alpha-D-muramoyl-L-alanyl-D-glutamyl-meso-2,6-diaminopimeloyl-D-alanyl-D-alanine + UDP-N-acetyl-alpha-D-glucosamine = di-trans,octa-cis-undecaprenyl diphospho-[N-acetyl-alpha-D-glucosaminyl-(1-&gt;4)]-N-acetyl-alpha-D-muramoyl-L-alanyl-D-glutamyl-meso-2,6-diaminopimeloyl-D-alanyl-D-alanine + UDP + H(+). Its pathway is cell wall biogenesis; peptidoglycan biosynthesis. Cell wall formation. Catalyzes the transfer of a GlcNAc subunit on undecaprenyl-pyrophosphoryl-MurNAc-pentapeptide (lipid intermediate I) to form undecaprenyl-pyrophosphoryl-MurNAc-(pentapeptide)GlcNAc (lipid intermediate II). The protein is UDP-N-acetylglucosamine--N-acetylmuramyl-(pentapeptide) pyrophosphoryl-undecaprenol N-acetylglucosamine transferase of Methylobacterium radiotolerans (strain ATCC 27329 / DSM 1819 / JCM 2831 / NBRC 15690 / NCIMB 10815 / 0-1).